A 281-amino-acid chain; its full sequence is UPF0294 protein VP2298 (281 aa).

The protein belongs to the UPF0294 family.

Its subcellular location is the cytoplasm. The chain is UPF0294 protein VP2298 from Vibrio parahaemolyticus serotype O3:K6 (strain RIMD 2210633).